Here is a 1135-residue protein sequence, read N- to C-terminus: Glutamate receptor ionotropic, NMDA 3A (1135 aa).

A signal peptide spans 1-23 (MRRLSLWWLLSRVCLLLPPPCAL). Residues 24-674 (VLAGVPSSSS…PIGAFMWPLH (651 aa)) are Extracellular-facing. The interval 60 to 117 (TAPRAASRAQEGGRAGAQRDDPESGTWRPPAPSQGARWLGSALHGRGPPGSRKLGEGA) is disordered. Residues Asn-145, Asn-264, Asn-275, Asn-285, Asn-296, Asn-300, Asn-426, Asn-439, Asn-549, and Asn-565 are each glycosylated (N-linked (GlcNAc...) asparagine). 2 cysteine pairs are disulfide-bonded: Cys-537/Cys-575 and Cys-543/Cys-576. Residues Ser-631, Ser-633, and Arg-638 each contribute to the glycine site. The D-serine site is built by Ser-633 and Arg-638. The helical transmembrane segment at 675-694 (WTMWLGIFVALHITAIFLTL) threads the bilayer. Residues 695 to 715 (YEWKSPFGMTPKGRNRNKVFS) are Cytoplasmic-facing. An intramembrane region (discontinuously helical) is located at residues 716–727 (FSSALNVCYALL). The Cytoplasmic portion of the chain corresponds to 728-741 (FGRTAAIKPPKCWT). Residues 742-761 (GRFLMNLWAIFCMFCLSTYT) form a helical membrane-spanning segment. Residues 762 to 932 (ANLAAVMVGE…TLQMGIKHFS (171 aa)) lie on the Extracellular side of the membrane. Position 801 (Ser-801) interacts with glycine. Ser-801, Ala-802, and Asp-845 together coordinate D-serine. Asp-845 lines the glycine pocket. Cys-859 and Cys-913 are joined by a disulfide. An N-linked (GlcNAc...) asparagine glycan is attached at Asn-886. Residues 933–948 (GLFVLLCIGFGLSILT) traverse the membrane as a helical segment. The Cytoplasmic segment spans residues 949–1135 (TIGEHIVHRL…YQKTNRTCES (187 aa)). The segment at 951–987 (GEHIVHRLLLPRIKNKSKLQYWLHTSQRFHRALNTSF) is PPP2CB binding site. Residues 1080-1129 (TTNGKADSLNVTRSSVIQELSELEKQIQVIRQELQLAVSRKTELEEYQKT) are a coiled coil. Residues 1082–1115 (NGKADSLNVTRSSVIQELSELEKQIQVIRQELQL) are GIT1-binding.

Belongs to the glutamate-gated ion channel (TC 1.A.10.1) family. NR3A/GRIN3A subfamily. In terms of assembly, heterotetramer. Forms heterotetrameric channels composed of two GluN1/zeta subunits (GRIN1), and two identical GluN3 subunits (GRIN3A or GRIN3B) (in vitro). Can also form heterotetrameric channels that contain at least two GluN1 subunits and at least a combination of one GluN2 and one GluN3 subunits (in vitro). Does not form functional homomeric channels. Found in a complex with GRIN1, GRIN2A or GRIN2B and PPP2CB. Probably interacts with PPP2CB. No complex with PPP2CB is detected when NMDARs are stimulated by NMDA. Interacts (via C-terminus) with GIT1, but not with GRIA1/GluA1, nor with synaptophysin/SYP; this interaction competes with GIT1 interaction with ARHGEF7/beta-PIX. Post-translationally, N-glycosylated. In terms of tissue distribution, isoform 1 and isoform 2 are expressed in olfactory bulb, frontal occipital, entorhinal and pyriform cortices, hippocampus, striatum, thalamus, cerebellum and spinal cord.

The protein localises to the cell membrane. It is found in the postsynaptic cell membrane. Its subcellular location is the postsynaptic density. It carries out the reaction Ca(2+)(in) = Ca(2+)(out). The catalysed reaction is Na(+)(in) = Na(+)(out). With respect to regulation, excitatory glycine receptors are inhibited by D-serine at a concentrion of 10uM. Its function is as follows. Component of a non-conventional N-methyl-D-aspartate (NMDA) receptors (NMDARs) that function as heterotetrameric, ligand-gated cation channels with low calcium permeability and low voltage-dependent block by Mg(2+). During the development of neural circuits, participates in the synaptic refinement period, restricting spine maturation and growth. Forms glutamatergic receptor complexes with GluN1 and GluN2 subunits which are activated by glycine binding to the GluN1 and GluN3 subunits and L-glutamate binding to GluN2 subunits. Forms excitatory glycinergic receptor complexes with GluN1 alone which are activated by glycine binding to the GluN1 and GluN3 subunits. GluN3A subunit also binds D-serine. Each GluN3 subunit confers differential attributes to channel properties, including activation, deactivation and desensitization kinetics, pH sensitivity, Ca2(+) permeability, and binding to allosteric modulators. By competing with GIT1 interaction with ARHGEF7/beta-PIX, may reduce GIT1/ARHGEF7-regulated local activation of RAC1, hence affecting signaling and limiting the maturation and growth of inactive synapses. This chain is Glutamate receptor ionotropic, NMDA 3A, found in Rattus norvegicus (Rat).